Consider the following 259-residue polypeptide: Malonyl-[acyl-carrier protein] O-methyltransferase 2 (259 aa).

It belongs to the methyltransferase superfamily.

The catalysed reaction is malonyl-[ACP] + S-adenosyl-L-methionine = malonyl-[ACP] methyl ester + S-adenosyl-L-homocysteine. It functions in the pathway cofactor biosynthesis; biotin biosynthesis. In terms of biological role, converts the free carboxyl group of a malonyl-thioester to its methyl ester by transfer of a methyl group from S-adenosyl-L-methionine (SAM). It allows to synthesize pimeloyl-ACP via the fatty acid synthetic pathway. The protein is Malonyl-[acyl-carrier protein] O-methyltransferase 2 of Ilyobacter polytropus (strain ATCC 51220 / DSM 2926 / LMG 16218 / CuHBu1).